Here is a 278-residue protein sequence, read N- to C-terminus: Indole-3-glycerol phosphate synthase (278 aa).

It belongs to the TrpC family.

The enzyme catalyses 1-(2-carboxyphenylamino)-1-deoxy-D-ribulose 5-phosphate + H(+) = (1S,2R)-1-C-(indol-3-yl)glycerol 3-phosphate + CO2 + H2O. It participates in amino-acid biosynthesis; L-tryptophan biosynthesis; L-tryptophan from chorismate: step 4/5. The sequence is that of Indole-3-glycerol phosphate synthase from Pseudomonas paraeruginosa (strain DSM 24068 / PA7) (Pseudomonas aeruginosa (strain PA7)).